Here is a 360-residue protein sequence, read N- to C-terminus: Photosystem II protein D1 2 (360 aa).

3 consecutive transmembrane segments (helical) span residues 29 to 46, 118 to 133, and 142 to 156; these read YVGW…TATT, HFLI…EWEL, and WICV…AATA. His-118 is a binding site for chlorophyll a. Tyr-126 contributes to the pheophytin a binding site. Residues Asp-170 and Glu-189 each contribute to the [CaMn4O5] cluster site. Residues 197–218 traverse the membrane as a helical segment; the sequence is FHMLGVAGVFGGSLFSAMHGSL. Residue His-198 coordinates chlorophyll a. Residues His-215 and 264-265 each bind a quinone; that span reads SF. His-215 is a Fe cation binding site. Residue His-272 participates in Fe cation binding. A helical membrane pass occupies residues 274 to 288; it reads FLGAWPVVGIWFTAL. [CaMn4O5] cluster-binding residues include His-332, Glu-333, Asp-342, and Ala-344. The propeptide occupies 345–360; it reads AGEQAPVALQAPAING.

The protein belongs to the reaction center PufL/M/PsbA/D family. As to quaternary structure, PSII is composed of 1 copy each of membrane proteins PsbA, PsbB, PsbC, PsbD, PsbE, PsbF, PsbH, PsbI, PsbJ, PsbK, PsbL, PsbM, PsbT, PsbX, PsbY, PsbZ, Psb30/Ycf12, peripheral proteins PsbO, CyanoQ (PsbQ), PsbU, PsbV and a large number of cofactors. It forms dimeric complexes. The cofactor is The D1/D2 heterodimer binds P680, chlorophylls that are the primary electron donor of PSII, and subsequent electron acceptors. It shares a non-heme iron and each subunit binds pheophytin, quinone, additional chlorophylls, carotenoids and lipids. D1 provides most of the ligands for the Mn4-Ca-O5 cluster of the oxygen-evolving complex (OEC). There is also a Cl(-1) ion associated with D1 and D2, which is required for oxygen evolution. The PSII complex binds additional chlorophylls, carotenoids and specific lipids.. Post-translationally, tyr-161 forms a radical intermediate that is referred to as redox-active TyrZ, YZ or Y-Z. C-terminally processed by CtpA; processing is essential to allow assembly of the oxygen-evolving complex and thus photosynthetic growth.

The protein resides in the cellular thylakoid membrane. The catalysed reaction is 2 a plastoquinone + 4 hnu + 2 H2O = 2 a plastoquinol + O2. In terms of biological role, photosystem II (PSII) is a light-driven water:plastoquinone oxidoreductase that uses light energy to abstract electrons from H(2)O, generating O(2) and a proton gradient subsequently used for ATP formation. It consists of a core antenna complex that captures photons, and an electron transfer chain that converts photonic excitation into a charge separation. The D1/D2 (PsbA/PsbD) reaction center heterodimer binds P680, the primary electron donor of PSII as well as several subsequent electron acceptors. This Picosynechococcus sp. (strain ATCC 27264 / PCC 7002 / PR-6) (Agmenellum quadruplicatum) protein is Photosystem II protein D1 2.